The chain runs to 229 residues: Ribonuclease 3 (229 aa).

The RNase III domain maps to 5-127; that stretch reads LNRLERKLGH…LIGAIYLDAG (123 aa). Position 40 (E40) interacts with Mg(2+). Residue D44 is part of the active site. Mg(2+) contacts are provided by D113 and E116. E116 is an active-site residue. Residues 154 to 224 form the DRBM domain; sequence DPKTRLQEFL…AAAALVALGV (71 aa).

This sequence belongs to the ribonuclease III family. Homodimer. Mg(2+) is required as a cofactor.

It localises to the cytoplasm. It carries out the reaction Endonucleolytic cleavage to 5'-phosphomonoester.. Its function is as follows. Digests double-stranded RNA. Involved in the processing of primary rRNA transcript to yield the immediate precursors to the large and small rRNAs (23S and 16S). Processes some mRNAs, and tRNAs when they are encoded in the rRNA operon. Processes pre-crRNA and tracrRNA of type II CRISPR loci if present in the organism. This chain is Ribonuclease 3, found in Azotobacter vinelandii (strain DJ / ATCC BAA-1303).